Consider the following 343-residue polypeptide: MQEILIPLKEKSYKVFLGELPEIKLKQKALIISDSIVAGLHLPYLLERLNALEVRVCVIESGEKYKNFHSLERILNNAFEMQLNRHSLMIALGGGVISDMVGFASSIYFRGIDFINIPTTLLAQVDASVGGKTGINTPYGKNLIGSFHQPKAVYMDLAFLKTLEKREFQAGVAEIIKMAVCFDKNLVERLETKDLKDCLEEVIFQSVNIKAQVVVQDEKERNIRAGLNYGHTFGMLIENETNYERFLHGEAIAIGMRMANDLALSLGMLTLKEYERIENLLKKFDLIFNYQITDIQKFYERLFLDKKSENQTLKFILPKGVGAFEIASHIPKETILKVLEKWH.

NAD(+) contacts are provided by residues 61–66, 95–99, 119–120, Lys132, Lys141, and 159–162; these read SGEKYK, GVISD, TT, and FLKT. Zn(2+) is bound by residues Glu174, His231, and His248.

The protein belongs to the sugar phosphate cyclases superfamily. Dehydroquinate synthase family. NAD(+) serves as cofactor. It depends on Co(2+) as a cofactor. Zn(2+) is required as a cofactor.

It is found in the cytoplasm. The catalysed reaction is 7-phospho-2-dehydro-3-deoxy-D-arabino-heptonate = 3-dehydroquinate + phosphate. It participates in metabolic intermediate biosynthesis; chorismate biosynthesis; chorismate from D-erythrose 4-phosphate and phosphoenolpyruvate: step 2/7. Functionally, catalyzes the conversion of 3-deoxy-D-arabino-heptulosonate 7-phosphate (DAHP) to dehydroquinate (DHQ). This is 3-dehydroquinate synthase from Helicobacter pylori (strain J99 / ATCC 700824) (Campylobacter pylori J99).